Reading from the N-terminus, the 227-residue chain is tRNA (guanine-N(1)-)-methyltransferase (227 aa).

S-adenosyl-L-methionine contacts are provided by residues G111 and L135–L140.

The protein belongs to the RNA methyltransferase TrmD family. Homodimer.

The protein localises to the cytoplasm. The enzyme catalyses guanosine(37) in tRNA + S-adenosyl-L-methionine = N(1)-methylguanosine(37) in tRNA + S-adenosyl-L-homocysteine + H(+). Its function is as follows. Specifically methylates guanosine-37 in various tRNAs. The chain is tRNA (guanine-N(1)-)-methyltransferase from Leifsonia xyli subsp. xyli (strain CTCB07).